A 408-amino-acid chain; its full sequence is Imidazolonepropionase (408 aa).

His-73 and His-75 together coordinate Fe(3+). Residues His-73 and His-75 each contribute to the Zn(2+) site. 3 residues coordinate 4-imidazolone-5-propanoate: Arg-82, Tyr-145, and His-178. Tyr-145 serves as a coordination point for N-formimidoyl-L-glutamate. His-243 is a binding site for Fe(3+). Residue His-243 coordinates Zn(2+). Gln-246 lines the 4-imidazolone-5-propanoate pocket. Asp-318 contacts Fe(3+). Asp-318 is a binding site for Zn(2+). The N-formimidoyl-L-glutamate site is built by Asn-320 and Gly-322. Ser-323 lines the 4-imidazolone-5-propanoate pocket.

This sequence belongs to the metallo-dependent hydrolases superfamily. HutI family. Zn(2+) serves as cofactor. Requires Fe(3+) as cofactor.

Its subcellular location is the cytoplasm. It catalyses the reaction 4-imidazolone-5-propanoate + H2O = N-formimidoyl-L-glutamate. Its pathway is amino-acid degradation; L-histidine degradation into L-glutamate; N-formimidoyl-L-glutamate from L-histidine: step 3/3. Catalyzes the hydrolytic cleavage of the carbon-nitrogen bond in imidazolone-5-propanoate to yield N-formimidoyl-L-glutamate. It is the third step in the universal histidine degradation pathway. In Shewanella baltica (strain OS155 / ATCC BAA-1091), this protein is Imidazolonepropionase.